The following is a 379-amino-acid chain: Adenylosuccinate synthetase (379 aa).

GTP-binding positions include 11–17 (GDEGKGK) and 39–41 (GHT). Asp12 acts as the Proton acceptor in catalysis. Residues Asp12 and Gly39 each coordinate Mg(2+). Residues 12 to 15 (DEGK), 37 to 40 (NAGH), Thr127, Arg141, Gln223, Thr238, and Arg302 contribute to the IMP site. The active-site Proton donor is His40. 298–304 (TTTGRGR) provides a ligand contact to substrate. Residues Arg304 and 330–332 (KLD) each bind GTP.

The protein belongs to the adenylosuccinate synthetase family. As to quaternary structure, homodimer. The cofactor is Mg(2+).

The protein resides in the cytoplasm. The enzyme catalyses IMP + L-aspartate + GTP = N(6)-(1,2-dicarboxyethyl)-AMP + GDP + phosphate + 2 H(+). It participates in purine metabolism; AMP biosynthesis via de novo pathway; AMP from IMP: step 1/2. In terms of biological role, plays an important role in the de novo pathway of purine nucleotide biosynthesis. Catalyzes the first committed step in the biosynthesis of AMP from IMP. The protein is Adenylosuccinate synthetase of Methanosarcina mazei (strain ATCC BAA-159 / DSM 3647 / Goe1 / Go1 / JCM 11833 / OCM 88) (Methanosarcina frisia).